Consider the following 55-residue polypeptide: Large ribosomal subunit protein bL33 (55 aa).

The span at 1–11 (MAKGARDKIKL) shows a compositional bias: basic and acidic residues. The disordered stretch occupies residues 1 to 24 (MAKGARDKIKLESTAGTGHFYTTT). The segment covering 14 to 24 (TAGTGHFYTTT) has biased composition (polar residues).

Belongs to the bacterial ribosomal protein bL33 family.

The sequence is that of Large ribosomal subunit protein bL33 from Burkholderia multivorans (strain ATCC 17616 / 249).